The following is a 206-amino-acid chain: dCTP deaminase, dUMP-forming (206 aa).

DCTP contacts are provided by residues 117 to 122 (RSSFGR), aspartate 135, 143 to 145 (TLE), glutamine 163, tyrosine 177, lysine 184, and glutamine 188. Residue glutamate 145 is the Proton donor/acceptor of the active site.

Belongs to the dCTP deaminase family. As to quaternary structure, homotrimer.

The catalysed reaction is dCTP + 2 H2O = dUMP + NH4(+) + diphosphate. It functions in the pathway pyrimidine metabolism; dUMP biosynthesis; dUMP from dCTP: step 1/1. Its function is as follows. Bifunctional enzyme that catalyzes both the deamination of dCTP to dUTP and the hydrolysis of dUTP to dUMP without releasing the toxic dUTP intermediate. This chain is dCTP deaminase, dUMP-forming, found in Methanococcus maripaludis (strain DSM 14266 / JCM 13030 / NBRC 101832 / S2 / LL).